Reading from the N-terminus, the 116-residue chain is Cell division protein FtsL (116 aa).

Residues 1–24 are Cytoplasmic-facing; it reads MMLTNRQIRVRLFESLKNSFFKKT. Residues 25-45 form a helical membrane-spanning segment; the sequence is VGISFALLFILLITAFSLIVV. At 46–116 the chain is on the periplasmic side; the sequence is RFEYKLQLNE…NEQKEELNNE (71 aa).

The protein belongs to the FtsL family. As to quaternary structure, part of a complex composed of FtsB, FtsL and FtsQ.

It is found in the cell inner membrane. In terms of biological role, essential cell division protein. May link together the upstream cell division proteins, which are predominantly cytoplasmic, with the downstream cell division proteins, which are predominantly periplasmic. The sequence is that of Cell division protein FtsL from Francisella tularensis subsp. tularensis (strain SCHU S4 / Schu 4).